Reading from the N-terminus, the 533-residue chain is MALSTNSTTSSLLPKTPLVQQPLLKNASLPTTTKAIRFIQPISAIHSSDSSKNTPIVSAKPSSPPAATSTAAATAVTKQEWSIDSWKTKKALQLPEYPNQEELKNVLKTIEDFPPIVFAGEARHLEEKLGEAAMGRAFLLQGGDCAESFKEFNANNIRDTFRILLQMGAVLMFGGQMPVIKVGRMAGQFAKPRSDNFEEKNGVKLPSYRGDNVNGDAFDLKSRTPDPQRLIRAYCQSAATLNLLRAFATGGYAAMQRVTQWNLDFTEHSEQGDRYRELANRVDEALGFMNAAGLTTDHPIMTTTEFWTSHECLLLPYEQSLTRLDSTSGLYYDCSAHFLWVGERTRQLDGAHVEFLRGIANPLGIKVSDKMDPSALVKLIEILNPQNKAGRITIITRMGAENMRVKLPHLIRAVRGAGQIVTWVSDPMHGNTIKAPCGLKTRPFDSIRAEVRAFFDVHEQEGSHPGGVHLEMTGQNVTECIGGSRTVTFDDLSSRYHTHCDPRLNASQSLELAFIIAERLRKRRLGSQSVLGQ.

The N-terminal 57 residues, 1 to 57 (MALSTNSTTSSLLPKTPLVQQPLLKNASLPTTTKAIRFIQPISAIHSSDSSKNTPIV), are a transit peptide targeting the chloroplast. The segment covering 47-56 (SSDSSKNTPI) has biased composition (polar residues). The interval 47–70 (SSDSSKNTPIVSAKPSSPPAATST) is disordered. The span at 57 to 70 (VSAKPSSPPAATST) shows a compositional bias: low complexity. Residue cysteine 145 coordinates Mn(2+). Substrate contacts are provided by residues arginine 184, 343-344 (ER), lysine 366, and arginine 397. Mn(2+) is bound by residues histidine 429, glutamate 471, and aspartate 501.

This sequence belongs to the class-II DAHP synthase family. In terms of assembly, homodimer. It depends on Mn(2+) as a cofactor. As to expression, mostly expressed in flowers, especially in petal limbs and tubes, and, to a lower extent, in roots, stems, stigmas, anthers, leaves and sepals.

Its subcellular location is the plastid. It is found in the chloroplast. The enzyme catalyses D-erythrose 4-phosphate + phosphoenolpyruvate + H2O = 7-phospho-2-dehydro-3-deoxy-D-arabino-heptonate + phosphate. It participates in metabolic intermediate biosynthesis; chorismate biosynthesis; chorismate from D-erythrose 4-phosphate and phosphoenolpyruvate: step 1/7. Functionally, involved in the production of volatile organic compounds (VOCs), including floral volatile benzenoids and phenylpropanoids (FVBP), in flowers of fragrant cultivars (e.g. cv. Mitchell and cv. V26), scent attracting pollinators (e.g. the night-active hawkmoth pollinator Manduca sexta). Catalyzes an aldol-like condensation reaction between phosphoenolpyruvate (PEP) and D-erythrose 4-phosphate (E4P) to generate 3-deoxy-D-arabino-heptulosonate 7-phosphate (DAH7P) and inorganic phosphate. This Petunia hybrida (Petunia) protein is Phospho-2-dehydro-3-deoxyheptonate aldolase 1, chloroplastic.